The chain runs to 405 residues: S-adenosylmethionine synthase (405 aa).

139–144 (GQGSVD) provides a ligand contact to ATP.

Belongs to the AdoMet synthase 2 family. The cofactor is Mg(2+).

The enzyme catalyses L-methionine + ATP + H2O = S-adenosyl-L-methionine + phosphate + diphosphate. It functions in the pathway amino-acid biosynthesis; S-adenosyl-L-methionine biosynthesis; S-adenosyl-L-methionine from L-methionine: step 1/1. In terms of biological role, catalyzes the formation of S-adenosylmethionine from methionine and ATP. In Thermococcus onnurineus (strain NA1), this protein is S-adenosylmethionine synthase.